The primary structure comprises 763 residues: MYVYTMENVPPSTNYLYNPKIVYNDHDIEFNVNYMPPLELDLGMAEINDIDNSINNFTNDTIIINPHTNFNSRIDGIYNINGKPIQSITDLYNLINTIFYDLIDVIIKSTLPIFNEHILYRVIGSKSLELYTNPVINNVKILTYDIEIVGTNNEIVLFLEKITMQLNAYINYKYGPNRYFIRNILRKYNLIDETCNWHYENESNNMFKFGFIKTTNSYQPCIFIHLILKKNLFTTGLVNNSNQTNNNHNVIYYPCVKFYSSKIKYKPITIANINYGRLPLIINKLLDEINTRYYNKELLDNLLNVNYFICNPIIQQQYCSENIKNCFDKNFSSAYYTDKYLSDFIPTKTNIKIVKDILNQYYGTYLFEFIKTHNCRSVFDSVLNPFNTNDKKQFINKIVDIVRNVDENNDRSLYRYTQEDHIPINLYCQMRNVGLLNDPKILDLIENFHQTKNDVDNLDNIYGILSGITEYTNSIDHLFKDEFDVVSVQTFLYFNAPNGQIIDSSNLTMDIGSIIYMPNFLSTSYVFFKDIHKFLSPVKVLYKIKIKKDIMRPLNWILVDKYSQLSNEKEILIKSGSFFVIESIEYLPVEKINESEYYNIKVITMRLCYDMDDAISHASNFGTEKLLYGYVNSNNIIGGSSNSQIKKISGPIKNITIINTNTLIIDPELFRTTSLNNYNDILNSYVSIYALLCPLLTNIYNKISFIHKKITLNYNSQKNSEKNLPIFDIPNIYSDSESHLDNLFYNKYRKYKTKYIYHKYKSN.

Positions 380–607 (DSVLNPFNTN…YNIKVITMRL (228 aa)) constitute a TR mART core domain. The helical transmembrane segment at 684–700 (SYVSIYALLCPLLTNIY) threads the bilayer.

It is found in the membrane. This is an uncharacterized protein from Acanthamoeba polyphaga mimivirus (APMV).